The following is a 500-amino-acid chain: Glutamate decarboxylase 3 (500 aa).

Position 8 is a phosphoserine (Ser-8). An N6-(pyridoxal phosphate)lysine modification is found at Lys-277.

This sequence belongs to the group II decarboxylase family. As to quaternary structure, homohexamer. Interacts with calmodulin. It depends on pyridoxal 5'-phosphate as a cofactor. As to expression, expressed at low levels in siliques.

The enzyme catalyses L-glutamate + H(+) = 4-aminobutanoate + CO2. Its function is as follows. Catalyzes the production of GABA. The calmodulin-binding is calcium-dependent and it is proposed that this may, directly or indirectly, form a calcium regulated control of GABA biosynthesis. The sequence is that of Glutamate decarboxylase 3 (GAD3) from Arabidopsis thaliana (Mouse-ear cress).